We begin with the raw amino-acid sequence, 203 residues long: dATP triphosphohydrolase (203 aa).

Residue arginine 17 participates in dATP binding. Histidine 31, histidine 73, aspartate 74, glutamate 77, aspartate 82, and aspartate 130 together coordinate Co(2+).

Belongs to the Caudovirales dATP triphosphohydrolase family. Co(2+) serves as cofactor.

It carries out the reaction dATP + H2O = 2'-deoxyadenosine + triphosphate + H(+). The enzyme catalyses dADP + H2O = 2'-deoxyadenosine + diphosphate. It catalyses the reaction dAMP + H2O = 2'-deoxyadenosine + phosphate. Its function is as follows. Catalyzes the hydrolysis of dATP, dADP and dAMP into dA. This step is essential for Z-genome synthesis (containing aminoadenine instead of adenine). Specifically removes dATP and its precursor dADP from the nucleotide pool of the host, preventing the incorporation of A into the phage genome and favoring the integration of the Z-base into the viral genome. This Acinetobacter phage SH-Ab 15497 protein is dATP triphosphohydrolase (datZ).